Consider the following 697-residue polypeptide: Elongation factor G 2 (697 aa).

Residues 5–280 form the tr-type G domain; it reads SKYRNIGIFA…AVVDYLPAPD (276 aa). Residues 14–21, 78–82, and 132–135 contribute to the GTP site; these read AHVDAGKT, DTPGH, and NKLD.

Belongs to the TRAFAC class translation factor GTPase superfamily. Classic translation factor GTPase family. EF-G/EF-2 subfamily.

The protein resides in the cytoplasm. Functionally, catalyzes the GTP-dependent ribosomal translocation step during translation elongation. During this step, the ribosome changes from the pre-translocational (PRE) to the post-translocational (POST) state as the newly formed A-site-bound peptidyl-tRNA and P-site-bound deacylated tRNA move to the P and E sites, respectively. Catalyzes the coordinated movement of the two tRNA molecules, the mRNA and conformational changes in the ribosome. In Shewanella oneidensis (strain ATCC 700550 / JCM 31522 / CIP 106686 / LMG 19005 / NCIMB 14063 / MR-1), this protein is Elongation factor G 2 (fusB).